Consider the following 61-residue polypeptide: Small ribosomal subunit protein uS14B (61 aa).

4 residues coordinate Zn(2+): Cys-24, Cys-27, Cys-40, and Cys-43.

This sequence belongs to the universal ribosomal protein uS14 family. Zinc-binding uS14 subfamily. As to quaternary structure, part of the 30S ribosomal subunit. Contacts proteins S3 and S10. It depends on Zn(2+) as a cofactor.

In terms of biological role, binds 16S rRNA, required for the assembly of 30S particles and may also be responsible for determining the conformation of the 16S rRNA at the A site. The polypeptide is Small ribosomal subunit protein uS14B (Salinispora arenicola (strain CNS-205)).